Reading from the N-terminus, the 84-residue chain is Cell division topological specificity factor (84 aa).

Belongs to the MinE family.

Functionally, prevents the cell division inhibition by proteins MinC and MinD at internal division sites while permitting inhibition at polar sites. This ensures cell division at the proper site by restricting the formation of a division septum at the midpoint of the long axis of the cell. This chain is Cell division topological specificity factor, found in Pseudomonas fluorescens (strain ATCC BAA-477 / NRRL B-23932 / Pf-5).